The chain runs to 119 residues: Iron-sulfur cluster insertion protein ErpA (119 aa).

Residues Cys-47, Cys-111, and Cys-113 each coordinate iron-sulfur cluster.

The protein belongs to the HesB/IscA family. In terms of assembly, homodimer. It depends on iron-sulfur cluster as a cofactor.

Functionally, required for insertion of 4Fe-4S clusters for at least IspG. The sequence is that of Iron-sulfur cluster insertion protein ErpA from Alcanivorax borkumensis (strain ATCC 700651 / DSM 11573 / NCIMB 13689 / SK2).